Reading from the N-terminus, the 362-residue chain is 2-aminoethylphosphonate--pyruvate transaminase (362 aa).

Position 193 is an N6-(pyridoxal phosphate)lysine (lysine 193).

This sequence belongs to the class-V pyridoxal-phosphate-dependent aminotransferase family. PhnW subfamily. In terms of assembly, homodimer. Pyridoxal 5'-phosphate serves as cofactor.

It catalyses the reaction (2-aminoethyl)phosphonate + pyruvate = phosphonoacetaldehyde + L-alanine. Its function is as follows. Involved in phosphonate degradation. In Bacteroides fragilis (strain ATCC 25285 / DSM 2151 / CCUG 4856 / JCM 11019 / LMG 10263 / NCTC 9343 / Onslow / VPI 2553 / EN-2), this protein is 2-aminoethylphosphonate--pyruvate transaminase.